The chain runs to 200 residues: ATP synthase subunit b 1 (200 aa).

The chain crosses the membrane as a helical span at residues 14–34; that stretch reads AAVIVVVSLMAFCCAGFAVAA.

Belongs to the ATPase B chain family. F-type ATPases have 2 components, F(1) - the catalytic core - and F(0) - the membrane proton channel. F(1) has five subunits: alpha(3), beta(3), gamma(1), delta(1), epsilon(1). F(0) has three main subunits: a(1), b(2) and c(10-14). The alpha and beta chains form an alternating ring which encloses part of the gamma chain. F(1) is attached to F(0) by a central stalk formed by the gamma and epsilon chains, while a peripheral stalk is formed by the delta and b chains.

Its subcellular location is the cell inner membrane. F(1)F(0) ATP synthase produces ATP from ADP in the presence of a proton or sodium gradient. F-type ATPases consist of two structural domains, F(1) containing the extramembraneous catalytic core and F(0) containing the membrane proton channel, linked together by a central stalk and a peripheral stalk. During catalysis, ATP synthesis in the catalytic domain of F(1) is coupled via a rotary mechanism of the central stalk subunits to proton translocation. Its function is as follows. Component of the F(0) channel, it forms part of the peripheral stalk, linking F(1) to F(0). This Desulfosudis oleivorans (strain DSM 6200 / JCM 39069 / Hxd3) (Desulfococcus oleovorans) protein is ATP synthase subunit b 1.